A 118-amino-acid polypeptide reads, in one-letter code: Large ribosomal subunit protein bL12 (118 aa).

Residue M1 is modified to N-acetylmethionine; in form MA2.

Belongs to the bacterial ribosomal protein bL12 family. In terms of assembly, homodimer. Part of the ribosomal stalk of the 50S ribosomal subunit. Forms a multimeric L10(L12)X complex, where L10 forms an elongated spine to which 2 to 4 L12 dimers bind in a sequential fashion. Binds GTP-bound translation factors. Acetylation of Met-1 converts MA1 to MA2.

Functionally, forms part of the ribosomal stalk which helps the ribosome interact with GTP-bound translation factors. Is thus essential for accurate translation. This chain is Large ribosomal subunit protein bL12, found in Micrococcus luteus (Micrococcus lysodeikticus).